The following is a 175-amino-acid chain: Inorganic pyrophosphatase (175 aa).

Positions 30, 44, and 56 each coordinate substrate. Mg(2+)-binding residues include D66, D71, and D103. Y142 provides a ligand contact to substrate.

This sequence belongs to the PPase family. As to quaternary structure, homohexamer. The cofactor is Mg(2+).

It localises to the cytoplasm. The enzyme catalyses diphosphate + H2O = 2 phosphate + H(+). In terms of biological role, catalyzes the hydrolysis of inorganic pyrophosphate (PPi) forming two phosphate ions. This Buchnera aphidicola subsp. Baizongia pistaciae (strain Bp) protein is Inorganic pyrophosphatase.